Consider the following 62-residue polypeptide: Photosystem II reaction center protein Z (62 aa).

2 consecutive transmembrane segments (helical) span residues 8-28 (AVFA…VVFA) and 41-61 (FSGT…NSLI).

Belongs to the PsbZ family. As to quaternary structure, PSII is composed of 1 copy each of membrane proteins PsbA, PsbB, PsbC, PsbD, PsbE, PsbF, PsbH, PsbI, PsbJ, PsbK, PsbL, PsbM, PsbT, PsbY, PsbZ, Psb30/Ycf12, at least 3 peripheral proteins of the oxygen-evolving complex and a large number of cofactors. It forms dimeric complexes.

Its subcellular location is the plastid. The protein localises to the chloroplast thylakoid membrane. May control the interaction of photosystem II (PSII) cores with the light-harvesting antenna, regulates electron flow through the 2 photosystem reaction centers. PSII is a light-driven water plastoquinone oxidoreductase, using light energy to abstract electrons from H(2)O, generating a proton gradient subsequently used for ATP formation. The polypeptide is Photosystem II reaction center protein Z (Pelargonium hortorum (Common geranium)).